A 220-amino-acid polypeptide reads, in one-letter code: Phosphopantothenoylcysteine decarboxylase (220 aa).

Residues 29–31 (GSV) and 54–56 (TKA) each bind FMN. The active-site Proton donor is the His-91. FMN-binding positions include 107 to 110 (SANT) and Ala-141. 3 residues coordinate N-[(R)-4-phosphopantothenoyl]-L-cysteine: Asn-143, Arg-173, and Ala-175. The Proton donor role is filled by Cys-176. Met-184 is a binding site for N-[(R)-4-phosphopantothenoyl]-L-cysteine.

It belongs to the HFCD (homooligomeric flavin containing Cys decarboxylase) superfamily. In terms of assembly, forms homotrimers. Interacts with HIP1. Interacts with HD1 in the dark. The cofactor is FMN. Expressed in root meristem, shoot apical meristem (SAM), intercalary meristem, floral meristem, embryo and tip of the coleoptile before true leaf emergence.

It localises to the nucleus. The catalysed reaction is N-[(R)-4-phosphopantothenoyl]-L-cysteine + H(+) = (R)-4'-phosphopantetheine + CO2. Its pathway is cofactor biosynthesis; coenzyme A biosynthesis; CoA from (R)-pantothenate: step 3/5. Its function is as follows. Catalyzes the decarboxylation of 4'-phosphopantothenoylcysteine to 4'-phosphopantetheine, a key step in coenzyme A biosynthesis. Involved in salt and osmotic tolerance, and light-regulated plant growth. Trimerization of HAL3 recruits and activates the E3 ubiquitin-protein ligase HIP1, which leads to the degradation of cell cycle suppressors, resulting in enhancement of cell division and plant growth. HAL3 function in cell division seems to be independent from its PPC decarboxylase activity. Acts as a positive regulator of flowering by binding to HD1 in the dark. The protein is Phosphopantothenoylcysteine decarboxylase of Oryza sativa subsp. japonica (Rice).